Here is a 649-residue protein sequence, read N- to C-terminus: tRNA-guanine(15) transglycosylase (649 aa).

Aspartate 88 (nucleophile) is an active-site residue. 2 residues coordinate substrate: aspartate 123 and alanine 194. Zn(2+) is bound by residues cysteine 280, cysteine 282, and cysteine 285. Residues 572–647 (KYRVIVDKSV…VAVNIRGGLK (76 aa)) form the PUA domain.

It belongs to the archaeosine tRNA-ribosyltransferase family. It depends on Zn(2+) as a cofactor.

The enzyme catalyses guanosine(15) in tRNA + 7-cyano-7-deazaguanine = 7-cyano-7-carbaguanosine(15) in tRNA + guanine. It participates in tRNA modification; archaeosine-tRNA biosynthesis. Its function is as follows. Exchanges the guanine residue with 7-cyano-7-deazaguanine (preQ0) at position 15 in the dihydrouridine loop (D-loop) of archaeal tRNAs. This Methanococcus vannielii (strain ATCC 35089 / DSM 1224 / JCM 13029 / OCM 148 / SB) protein is tRNA-guanine(15) transglycosylase.